We begin with the raw amino-acid sequence, 478 residues long: Stromelysin-1 (478 aa).

Residues 1–17 (MQNLPALLLFCGVVCSA) form the signal peptide. A propeptide spans 18–99 (YPVDRAAEDE…PRCGVPDVGD (82 aa)) (activation peptide). The Cysteine switch signature appears at 90–97 (PRCGVPDV). Cys92 provides a ligand contact to Zn(2+). Ca(2+) is bound by residues Asp124 and Asp158. Residues His168 and Asp170 each contribute to the Zn(2+) site. Positions 175, 176, 178, and 180 each coordinate Ca(2+). His183 serves as a coordination point for Zn(2+). 2 residues coordinate Ca(2+): Gly190 and Asp194. Position 196 (His196) interacts with Zn(2+). Ca(2+)-binding residues include Asp198, Asp199, and Glu201. His218 contacts Zn(2+). The active site involves Glu219. 2 residues coordinate Zn(2+): His222 and His228. The disordered stretch occupies residues 260 to 286 (QSLYGGPPSDSSNDPVVPTESVPPGPG). A compositionally biased stretch (low complexity) spans 266–277 (PPSDSSNDPVVP). 4 Hemopexin repeats span residues 288-337 (PAAC…WPSL), 338-384 (PSGL…GFPP), 386-434 (VKKI…FPGV), and 435-478 (DSKV…WLNC). Residues Cys291 and Cys478 are joined by a disulfide bond. Residue Asp298 coordinates Ca(2+). Ca(2+) contacts are provided by Asp390 and Asp439. N-linked (GlcNAc...) asparagine glycosylation occurs at Asn452.

This sequence belongs to the peptidase M10A family. Requires Ca(2+) as cofactor. The cofactor is Zn(2+).

It localises to the secreted. The protein localises to the extracellular space. It is found in the extracellular matrix. It carries out the reaction Preferential cleavage where P1', P2' and P3' are hydrophobic residues.. In terms of biological role, metalloproteinase with a rather broad substrate specificity that can degrade fibronectin, laminin, gelatins of type I, III, IV, and V; collagens III, IV, X, and IX, and cartilage proteoglycans. Activates different molecules including growth factors, plasminogen or other matrix metalloproteinases such as MMP9. Once released into the extracellular matrix (ECM), the inactive pro-enzyme is activated by the plasmin cascade signaling pathway. Also acts intracellularly. For example, in dopaminergic neurons, gets activated by the serine protease HTRA2 upon stress and plays a pivotal role in DA neuronal degeneration by mediating microglial activation and alpha-synuclein/SNCA cleavage. In addition, plays a role in immune response and possesses antiviral activity against various viruses. Mechanistically, translocates from the cytoplasm into the cell nucleus upon virus infection to influence NF-kappa-B activities. This chain is Stromelysin-1 (MMP3), found in Canis lupus familiaris (Dog).